Reading from the N-terminus, the 119-residue chain is Large ribosomal subunit protein uL18 (119 aa).

This sequence belongs to the universal ribosomal protein uL18 family. As to quaternary structure, part of the 50S ribosomal subunit; part of the 5S rRNA/L5/L18/L25 subcomplex. Contacts the 5S and 23S rRNAs.

Functionally, this is one of the proteins that bind and probably mediate the attachment of the 5S RNA into the large ribosomal subunit, where it forms part of the central protuberance. This chain is Large ribosomal subunit protein uL18, found in Xanthomonas oryzae pv. oryzae (strain MAFF 311018).